Reading from the N-terminus, the 398-residue chain is S-adenosylmethionine synthase (398 aa).

His16 serves as a coordination point for ATP. Asp18 is a binding site for Mg(2+). Position 51 (Glu51) interacts with K(+). L-methionine is bound by residues Glu64 and Gln108. The interval 108–118 is flexible loop; it reads QSADIAQGVDA. Residues 176–178, 242–243, Asp251, 257–258, Ala274, and Lys278 each bind ATP; these read DSK, KF, and RK. Asp251 contributes to the L-methionine binding site. Lys282 contacts L-methionine.

Belongs to the AdoMet synthase family. As to quaternary structure, homotetramer; dimer of dimers. Requires Mg(2+) as cofactor. The cofactor is K(+).

The protein resides in the cytoplasm. It catalyses the reaction L-methionine + ATP + H2O = S-adenosyl-L-methionine + phosphate + diphosphate. The protein operates within amino-acid biosynthesis; S-adenosyl-L-methionine biosynthesis; S-adenosyl-L-methionine from L-methionine: step 1/1. Its function is as follows. Catalyzes the formation of S-adenosylmethionine (AdoMet) from methionine and ATP. The overall synthetic reaction is composed of two sequential steps, AdoMet formation and the subsequent tripolyphosphate hydrolysis which occurs prior to release of AdoMet from the enzyme. The polypeptide is S-adenosylmethionine synthase (Rhodopseudomonas palustris (strain HaA2)).